A 694-amino-acid chain; its full sequence is Beta-galactosidase (694 aa).

The interval 1–31 is disordered; the sequence is MGKRFPSGWFSPRVHPPRRQRSPMTNQATPG. Residues 22-31 are compositionally biased toward polar residues; sequence SPMTNQATPG. Positions 144 and 182 each coordinate substrate. Glutamate 183 serves as the catalytic Proton donor. Catalysis depends on glutamate 341, which acts as the Nucleophile. Substrate-binding positions include tryptophan 349 and 389 to 392; that span reads EKFH.

The protein belongs to the glycosyl hydrolase 42 family. As to quaternary structure, homotrimer.

The catalysed reaction is Hydrolysis of terminal non-reducing beta-D-galactose residues in beta-D-galactosides.. Strongly inhibited by glucose. No activity is lost during treatment with 100 mM EDTA after 2 hours. Activity not considerably affected by metal ions (5 mM), including Na(+), K(+), Mg(2+), Co(2+) and Ca(2+). Completely inhibited by Cu(2+) and Zn(2+) (5 mM) and is strongly inhibited by Mn(2+) (11%), Fe(2+) (25%) and Ni(2+) (38%) in comparison with the activity in the absence of cations (100%). Activity not affected by dithiothreitol, beta-mercaptoethanol and L-cysteine whereas reduced glutathione almost completely inactivates it. With ONPG as substrate, the addition of ethanol up to 20% still slightly stimulates activity. The activity increases up to 120% in the presence of 8% v/v ethanol at pH 5.5. Hydrolyzes p-nitrophenyl-beta-D-galactopyranoside (PNPG), o-nitrophenyl-beta-D-galactopyranoside (ONPG) and chromogen 5-bromo-4-chloro-3-indolyl-beta-D-galactopyranoside (X-gal), with highest activity against PNPG. Also acts on p-nitrophenyl-beta-D-glucopyranoside (PNPGlu) and o-nitrophenyl-beta-D-glucopyranoside (ONPGlu), but with significantly lower activity. This is Beta-galactosidase from Arthrobacter sp.